Reading from the N-terminus, the 611-residue chain is Threonine--tRNA ligase (611 aa).

The catalytic stretch occupies residues 209 to 502 (DHRRLGKDLE…MTENYAGDFP (294 aa)). Zn(2+) is bound by residues Cys-302, His-353, and His-479.

It belongs to the class-II aminoacyl-tRNA synthetase family. In terms of assembly, homodimer. The cofactor is Zn(2+).

It is found in the cytoplasm. It carries out the reaction tRNA(Thr) + L-threonine + ATP = L-threonyl-tRNA(Thr) + AMP + diphosphate + H(+). Functionally, catalyzes the attachment of threonine to tRNA(Thr) in a two-step reaction: L-threonine is first activated by ATP to form Thr-AMP and then transferred to the acceptor end of tRNA(Thr). Also edits incorrectly charged L-seryl-tRNA(Thr). The chain is Threonine--tRNA ligase from Synechococcus sp. (strain CC9902).